Reading from the N-terminus, the 487-residue chain is Arginine ADP-riboxanase OspC3 (487 aa).

Residues 1–14 are compositionally biased toward polar residues; it reads MRVETHSPSFTNPN. Positions 1 to 41 are disordered; sequence MRVETHSPSFTNPNPAEACSGDPTEMGSRLSGVSRAPLPHA. NAD(+) is bound by residues H137, Q138, S139, S164, N167, and T168. E325 is an active-site residue. ANK repeat units follow at residues 368-398 and 444-473; these read DAVT…EAKD and RGDT…DRNL.

Belongs to the OspC family.

The protein localises to the secreted. It is found in the host cytoplasm. It carries out the reaction L-arginyl-[protein] + NAD(+) = ADP-riboxanated L-argininyl-[protein] + nicotinamide + NH4(+) + H(+). Its function is as follows. ADP-riboxanase effector that inhibits host cell pyroptosis. Acts by mediating arginine ADP-riboxanation of host CASP4/CASP11, blocking CASP4/CASP11 autoprocessing. This prevents CASP4 activation and ability to recognize and cleave GSDMD, thereby inhibiting LPS-induced pyroptosis. ADP-riboxanation takes place in two steps: OspC3 first catalyzes ADP-ribosylation of target Arg, and then initiates a deamination to remove one N-omega group. This Chromobacterium sp. (strain ATCC 53434 / SC 14030) protein is Arginine ADP-riboxanase OspC3.